Consider the following 183-residue polypeptide: dCTP deaminase, dUMP-forming (183 aa).

DCTP-binding positions include K99–R104, D117, T125–E127, Q146, Y159, K166, and Q170. E127 (proton donor/acceptor) is an active-site residue.

The protein belongs to the dCTP deaminase family. In terms of assembly, homotrimer.

It catalyses the reaction dCTP + 2 H2O = dUMP + NH4(+) + diphosphate. Its pathway is pyrimidine metabolism; dUMP biosynthesis; dUMP from dCTP: step 1/1. Bifunctional enzyme that catalyzes both the deamination of dCTP to dUTP and the hydrolysis of dUTP to dUMP without releasing the toxic dUTP intermediate. This chain is dCTP deaminase, dUMP-forming, found in Methanoregula boonei (strain DSM 21154 / JCM 14090 / 6A8).